A 366-amino-acid polypeptide reads, in one-letter code: Histidinol-phosphate aminotransferase (366 aa).

Position 228 is an N6-(pyridoxal phosphate)lysine (Lys228).

It belongs to the class-II pyridoxal-phosphate-dependent aminotransferase family. Histidinol-phosphate aminotransferase subfamily. Homodimer. Pyridoxal 5'-phosphate serves as cofactor.

The catalysed reaction is L-histidinol phosphate + 2-oxoglutarate = 3-(imidazol-4-yl)-2-oxopropyl phosphate + L-glutamate. The protein operates within amino-acid biosynthesis; L-histidine biosynthesis; L-histidine from 5-phospho-alpha-D-ribose 1-diphosphate: step 7/9. The sequence is that of Histidinol-phosphate aminotransferase from Corynebacterium glutamicum (strain R).